A 127-amino-acid polypeptide reads, in one-letter code: Fluoride-specific ion channel FluC (127 aa).

Transmembrane regions (helical) follow at residues 2–22 (LSSL…RWAI), 35–55 (LGTL…IAIF), 68–88 (LITT…LEVV), and 104–124 (LLNL…VVWI). The Na(+) site is built by glycine 75 and threonine 78.

It belongs to the fluoride channel Fluc/FEX (TC 1.A.43) family.

The protein resides in the cell inner membrane. The catalysed reaction is fluoride(in) = fluoride(out). Its activity is regulated as follows. Na(+) is not transported, but it plays an essential structural role and its presence is essential for fluoride channel function. In terms of biological role, fluoride-specific ion channel. Important for reducing fluoride concentration in the cell, thus reducing its toxicity. This is Fluoride-specific ion channel FluC from Serratia proteamaculans (strain 568).